Here is a 282-residue protein sequence, read N- to C-terminus: BURP domain-containing protein BNM2A (282 aa).

The first 26 residues, 1–26, serve as a signal peptide directing secretion; that stretch reads MASLRFSVTFPALLSLLLLSLWVVEA. Positions 60 to 282 constitute a BURP domain; it reads FFKISDLKLG…PLDNIVWVSK (223 aa).

In terms of tissue distribution, expressed in the radicle and cotyledon of germinating seeds 2 days post-imbibition (DPI), in stems and roots of 30-DPI young plants and in floral buds, but not in fully open flowers or leaves. Expressed in the embryo and seed coat tissues of developing seeds. The protein accumulates only in seeds and only long after transcript accumulation becomes evident.

It is found in the protein storage vacuole. The sequence is that of BURP domain-containing protein BNM2A from Brassica napus (Rape).